Consider the following 383-residue polypeptide: Lipid-A-disaccharide synthase (383 aa).

The protein belongs to the LpxB family.

The enzyme catalyses a lipid X + a UDP-2-N,3-O-bis[(3R)-3-hydroxyacyl]-alpha-D-glucosamine = a lipid A disaccharide + UDP + H(+). The protein operates within bacterial outer membrane biogenesis; LPS lipid A biosynthesis. Functionally, condensation of UDP-2,3-diacylglucosamine and 2,3-diacylglucosamine-1-phosphate to form lipid A disaccharide, a precursor of lipid A, a phosphorylated glycolipid that anchors the lipopolysaccharide to the outer membrane of the cell. The protein is Lipid-A-disaccharide synthase of Myxococcus xanthus (strain DK1622).